The following is a 227-amino-acid chain: uncharacterized protein (227 aa).

Transmembrane regions (helical) follow at residues Cys13 to Ser35 and Ile155 to Leu177. Residues Gly192 to Phe227 form a disordered region. The segment covering Gly217 to Phe227 has biased composition (pro residues).

The protein localises to the cell membrane. This is an uncharacterized protein from Treponema pallidum (strain Nichols).